The chain runs to 196 residues: Putative NADH dehydrogenase/NAD(P)H nitroreductase Rpal_4764 (196 aa).

This sequence belongs to the nitroreductase family. HadB/RutE subfamily. The cofactor is FMN.

The sequence is that of Putative NADH dehydrogenase/NAD(P)H nitroreductase Rpal_4764 from Rhodopseudomonas palustris (strain TIE-1).